The chain runs to 208 residues: Large ribosomal subunit protein bL25 (208 aa).

This sequence belongs to the bacterial ribosomal protein bL25 family. CTC subfamily. Part of the 50S ribosomal subunit; part of the 5S rRNA/L5/L18/L25 subcomplex. Contacts the 5S rRNA. Binds to the 5S rRNA independently of L5 and L18.

Its function is as follows. This is one of the proteins that binds to the 5S RNA in the ribosome where it forms part of the central protuberance. This chain is Large ribosomal subunit protein bL25, found in Syntrophotalea carbinolica (strain DSM 2380 / NBRC 103641 / GraBd1) (Pelobacter carbinolicus).